The sequence spans 393 residues: MAPSQLAWLLRLAAFFHLCTLLAGQHLGMTKCNITCHKMTSPIPVTLLIHYQLNQESCGKRAIILETRQHRHFCADPKEKWVQDAMKHLDHQTAALTRNGGKFEKRVDNVTPRITSATRGLSPTALAKPESATVEDLTLEPTAISQEARRPMGTSQEPPAAVTGSSPSTSKAQDAGLAAKPQSTGISEVAAVSTTIWPSSAVYQSGSSLWAEEKATESPPTIALSTQASTTSSPKQNVGSEGQPPWVQEQDSTPEKSPGPEETNPVHTDIFQDRGPGSTVHPSVAPTSSEKTPSPELVASGSQAPKVEEPIHATADPQKLSVFITPVPDSQAATRRQAVGLLAFLGLLFCLGVAMFAYQSLQGCPRKMAGEMVEGLRYVPRSCGSNSYVLVPV.

Positions 1 to 24 (MAPSQLAWLLRLAAFFHLCTLLAG) are cleaved as a signal peptide. The segment at 25–100 (QHLGMTKCNI…HQTAALTRNG (76 aa)) is chemokine and involved in interaction with ITGAV:ITGB3 and ITGA4:ITGB1. Topologically, residues 25–337 (QHLGMTKCNI…PDSQAATRRQ (313 aa)) are extracellular. 2 disulfide bridges follow: Cys-32–Cys-58 and Cys-36–Cys-74. N-linked (GlcNAc...) asparagine glycosylation is present at Asn-33. Positions 101–337 (GKFEKRVDNV…PDSQAATRRQ (237 aa)) are mucin-like stalk. Disordered regions lie at residues 114-184 (ITSA…PQST) and 213-303 (EKAT…SGSQ). Composition is skewed to polar residues over residues 153-172 (GTSQ…TSKA) and 223-240 (ALST…NVGS). The helical transmembrane segment at 338-358 (AVGLLAFLGLLFCLGVAMFAY) threads the bilayer. Over 359-393 (QSLQGCPRKMAGEMVEGLRYVPRSCGSNSYVLVPV) the chain is Cytoplasmic.

The protein belongs to the intercrine delta family. Monomer. Forms a ternary complex with CX3CR1 and ITGAV:ITGB3 or ITGA4:ITGB1. A soluble short form may be released by proteolytic cleavage from the long membrane-anchored form. As to expression, highest levels in brain (neurons). Significant levels in kidney, heart, lung and adrenal gland.

The protein resides in the cell membrane. Its subcellular location is the secreted. Its function is as follows. Chemokine that acts as a ligand for both CX3CR1 and integrins ITGAV:ITGB3 and ITGA4:ITGB1. The CX3CR1-CX3CL1 signaling exerts distinct functions in different tissue compartments, such as immune response, inflammation, cell adhesion and chemotaxis. Regulates leukocyte adhesion and migration processes at the endothelium. Can activate integrins in both a CX3CR1-dependent and CX3CR1-independent manner. In the presence of CX3CR1, activates integrins by binding to the classical ligand-binding site (site 1) in integrins. In the absence of CX3CR1, binds to a second site (site 2) in integrins which is distinct from site 1 and enhances the binding of other integrin ligands to site 1. In terms of biological role, the soluble form is chemotactic for T-cells and monocytes, but not for neutrophils. Functionally, the membrane-bound form promotes adhesion of those leukocytes to endothelial cells. This Rattus norvegicus (Rat) protein is Fractalkine (Cx3cl1).